Here is a 139-residue protein sequence, read N- to C-terminus: Putative nickel-responsive regulator (139 aa).

Positions 79, 90, 92, and 98 each coordinate Ni(2+).

Belongs to the transcriptional regulatory CopG/NikR family. The cofactor is Ni(2+).

In terms of biological role, transcriptional regulator. This Pelobacter propionicus (strain DSM 2379 / NBRC 103807 / OttBd1) protein is Putative nickel-responsive regulator.